A 466-amino-acid chain; its full sequence is Phosphomethylpyrimidine synthase (466 aa).

Substrate contacts are provided by residues N80, M109, Y139, H175, 195–197 (SRG), 236–239 (DSLR), and E275. A Zn(2+)-binding site is contributed by H279. Position 302 (Y302) interacts with substrate. H343 lines the Zn(2+) pocket. 3 residues coordinate [4Fe-4S] cluster: C423, C426, and C431.

Belongs to the ThiC family. [4Fe-4S] cluster is required as a cofactor.

It carries out the reaction 5-amino-1-(5-phospho-beta-D-ribosyl)imidazole + S-adenosyl-L-methionine = 4-amino-2-methyl-5-(phosphooxymethyl)pyrimidine + CO + 5'-deoxyadenosine + formate + L-methionine + 3 H(+). Its pathway is cofactor biosynthesis; thiamine diphosphate biosynthesis. Catalyzes the synthesis of the hydroxymethylpyrimidine phosphate (HMP-P) moiety of thiamine from aminoimidazole ribotide (AIR) in a radical S-adenosyl-L-methionine (SAM)-dependent reaction. This chain is Phosphomethylpyrimidine synthase, found in Prochlorococcus marinus (strain NATL1A).